A 630-amino-acid polypeptide reads, in one-letter code: Putative polypeptide N-acetylgalactosaminyltransferase 10 (630 aa).

The Cytoplasmic portion of the chain corresponds to 1 to 6 (MNVDLR). A helical; Signal-anchor for type II membrane protein transmembrane segment spans residues 7–26 (LIVRLLLAILLTSLVTTILM). The Lumenal segment spans residues 27–630 (GKQIHRRLVK…APYDPQREPH (604 aa)). N-linked (GlcNAc...) asparagine glycosylation is found at N72, N84, N146, and N168. 3 disulfide bridges follow: C157/C386, C377/C456, and C496/C513. The catalytic subdomain A stretch occupies residues 166–277 (LPNVTVIIAF…TNWLPPLLEP (112 aa)). The substrate site is built by D207 and R238. D261 contributes to the Mn(2+) binding site. S262 is a binding site for substrate. A Mn(2+)-binding site is contributed by H263. Positions 333–394 (PYRTPVLSGA…PCARVGHIGK (62 aa)) are catalytic subdomain B. W363 is a substrate binding site. H391 serves as a coordination point for Mn(2+). A Ricin B-type lectin domain is found at 483-618 (FSGVIESVAF…NQLEQQWKVG (136 aa)). N525 carries N-linked (GlcNAc...) asparagine glycosylation. Disulfide bonds link C543/C559 and C586/C606.

The protein belongs to the glycosyltransferase 2 family. GalNAc-T subfamily. Mn(2+) serves as cofactor. As to expression, during embryonic stages 9-11, weakly expressed in the mesoderm. During embryonic stages 12-13, very weak expression is observed in the somatic mesoderm region. No expression detected from stage 14-15. During embryonic stages 16-17, expressed in the epidermis and the antennomaxillary complex. In third instar larvae, expressed ubiquitously in wing, eye-antennal, leg and haltere imaginal disks.

The protein resides in the golgi apparatus membrane. It catalyses the reaction L-seryl-[protein] + UDP-N-acetyl-alpha-D-galactosamine = a 3-O-[N-acetyl-alpha-D-galactosaminyl]-L-seryl-[protein] + UDP + H(+). The catalysed reaction is L-threonyl-[protein] + UDP-N-acetyl-alpha-D-galactosamine = a 3-O-[N-acetyl-alpha-D-galactosaminyl]-L-threonyl-[protein] + UDP + H(+). The protein operates within protein modification; protein glycosylation. Functionally, may catalyze the initial reaction in O-linked oligosaccharide biosynthesis, the transfer of an N-acetyl-D-galactosamine residue to a serine or threonine residue on the protein receptor. This Drosophila melanogaster (Fruit fly) protein is Putative polypeptide N-acetylgalactosaminyltransferase 10 (pgant10).